The primary structure comprises 359 residues: uncharacterized protein (359 aa).

The PINc domain maps to 163 to 275 (VVDTSCIIDG…SKVANLQKVQ (113 aa)). Residues Asp-165 and Asp-244 each coordinate Mg(2+). The TRAM domain occupies 289-350 (IYLPGDSLEL…LQTSAGRMIF (62 aa)).

This sequence belongs to the ycf81 family. The protein in the central section; belongs to the PINc/VapC protein family. Mg(2+) is required as a cofactor.

Its function is as follows. An RNase. This is an uncharacterized protein from Synechocystis sp. (strain ATCC 27184 / PCC 6803 / Kazusa).